A 118-amino-acid chain; its full sequence is UPF0449 protein C19orf25 homolog (118 aa).

Phosphotyrosine is present on Tyr63. Residues 69-105 (YVAMNQRLQQAGAQLEQKRADLQQAGEELERDISQVG) adopt a coiled-coil conformation.

It belongs to the UPF0449 family.

The polypeptide is UPF0449 protein C19orf25 homolog (Bos taurus (Bovine)).